We begin with the raw amino-acid sequence, 857 residues long: MAHTSNHLFILLLLISVYGFLGHKKNYVTVFYGIPAWRNATVPLFCATTNRDTWGTVQCLPDNGDYTEISVNITEAFDAWNNTVTEQAVDDVWSLFETSIKPCVKLTPLCVAMRCNNTGTNTTTKPITTPITTTKPSENLLNDTSPCIKNDTCPGIGLENTVDCYFNMTGLRRDEKKQYKDTWYEKDLECNGNSTSTICYMRTCNTSVIQESCDKHYWDSLRFRYCAPPGYALLRCNDTNYSGFMPKCSKVVVSSCTRMMETQTSTWFGFNGTRTENRTYMYWHSKDNRTIISLNKYYNLTMHCRRPGNKTVIPITIMSGLNFHSQPLNTRPRQAWCWFKGNWIEAIREVKETIIKHPRYKGTNNTERIRLVGPSAGSDPEVRHMWTNCRGEFFYCNMTWFLNWVENRTGTTQKNYVTCHIKQIVNTWHKVGKYVYLPPREGTLSCNSSVTSLIANIDVYYDGNDTKTNITMSAEVGELYRLELGDYKLVEITPIGFAPTEIKRYSSTTPRNKRGVMVLGFLGLLAMAGSAMGATSLTLSAQSRTLLAGIVQQQQQLLDVVKRQQELLRLTVWGTKNLQTRVTAIEKYLKDQALLNSWGCAFRQVCHTTVPWPNETLTPDWENMTWQQWEKRVNFLDANITALLEEAQIQQERNMYELQKLNSWDVFGNWFDFTSWMAYIRLGLYVVAGLIVLRIVIYIMQMLARLRKGYRPVFSSPPSYTQQIPIRKHRGQPANEETEDEGGNEGAYRSWPWQIEYAHFLIRQLRNLLIWLYNGCRNLLLKTSQILQPALQPLRLSLAYLQYGISWFQEAIQAATRAARETLANTGRALWKALRRTAEAIIAIPRRIRQGLELALL.

A signal peptide spans 1 to 26; it reads MAHTSNHLFILLLLISVYGFLGHKKN. Over 27–682 the chain is Extracellular; sequence YVTVFYGIPA…FTSWMAYIRL (656 aa). Asn39 is a glycosylation site (N-linked (GlcNAc...) asparagine; by host). Cysteines 46 and 59 form a disulfide. N-linked (GlcNAc...) asparagine; by host glycans are attached at residues Asn72, Asn81, Asn116, Asn121, Asn142, Asn150, Asn167, Asn193, Asn205, Asn237, Asn240, Asn271, Asn277, Asn288, Asn299, Asn309, Asn364, Asn397, Asn407, Asn447, Asn464, and Asn469. 5 cysteine pairs are disulfide-bonded: Cys103–Cys213, Cys110–Cys204, Cys115–Cys164, Cys226–Cys256, and Cys236–Cys248. The V1 stretch occupies residues 115–163; that stretch reads CNNTGTNTTTKPITTPITTTKPSENLLNDTSPCIKNDTCPGIGLENTVD. Positions 164-204 are V2; sequence CYFNMTGLRRDEKKQYKDTWYEKDLECNGNSTSTICYMRTC. A V3 region spans residues 304–336; sequence CRRPGNKTVIPITIMSGLNFHSQPLNTRPRQAW. A disulfide bridge connects residues Cys304 and Cys337. 2 disulfide bridges follow: Cys389/Cys446 and Cys396/Cys419. The segment at 396 to 419 is V4; it reads CNMTWFLNWVENRTGTTQKNYVTC. The tract at residues 464 to 472 is V5; it reads NDTKTNITM. The interval 515–535 is fusion peptide; sequence GVMVLGFLGLLAMAGSAMGAT. Residues 578 to 594 form an immunosuppression region; that stretch reads LQTRVTAIEKYLKDQAL. 3 N-linked (GlcNAc...) asparagine; by host glycosylation sites follow: Asn614, Asn623, and Asn639. Positions 627–648 form a coiled coil; that stretch reads QQWEKRVNFLDANITALLEEAQ. Residues 660–681 are MPER; binding to GalCer; it reads KLNSWDVFGNWFDFTSWMAYIR. Residues 683–703 traverse the membrane as a helical segment; the sequence is GLYVVAGLIVLRIVIYIMQML. Topologically, residues 704-857 are cytoplasmic; sequence ARLRKGYRPV…IRQGLELALL (154 aa). The YXXV motif; contains endocytosis signal signature appears at 710–713; it reads YRPV. Cys776 carries the S-palmitoyl cysteine; by host lipid modification. A Di-leucine internalization motif motif is present at residues 856–857; it reads LL.

In terms of assembly, the mature envelope protein (Env) consists of a homotrimer of non-covalently associated gp120-gp41 heterodimers. The resulting complex protrudes from the virus surface as a spike. There seems to be as few as 10 spikes on the average virion. Interacts with human CD4, CCR5 and CXCR4, to form a P4HB/PDI-CD4-CXCR4-gp120 complex. Gp120 also interacts with the C-type lectins CD209/DC-SIGN and CLEC4M/DC-SIGNR (collectively referred to as DC-SIGN(R)). Gp120 and gp41 interact with GalCer. As to quaternary structure, the mature envelope protein (Env) consists of a homotrimer of non-covalently associated gp120-gp41 heterodimers. The resulting complex protrudes from the virus surface as a spike. There seems to be as few as 10 spikes on the average virion. Specific enzymatic cleavages in vivo yield mature proteins. Envelope glycoproteins are synthesized as an inactive precursor that is heavily N-glycosylated and processed likely by host cell furin in the Golgi to yield the mature SU and TM proteins. The cleavage site between SU and TM requires the minimal sequence [KR]-X-[KR]-R. In terms of processing, palmitoylation of the transmembrane protein and of Env polyprotein (prior to its proteolytic cleavage) is essential for their association with host cell membrane lipid rafts. Palmitoylation is therefore required for envelope trafficking to classical lipid rafts, but not for viral replication.

The protein localises to the virion membrane. Its subcellular location is the host cell membrane. It is found in the host endosome membrane. In terms of biological role, the surface protein gp120 (SU) attaches the virus to the host lymphoid cell by binding to the primary receptor CD4. This interaction induces a structural rearrangement creating a high affinity binding site for a chemokine coreceptor like CXCR4 and/or CCR5. This peculiar 2 stage receptor-interaction strategy allows gp120 to maintain the highly conserved coreceptor-binding site in a cryptic conformation, protected from neutralizing antibodies. Since CD4 also displays a binding site for the disulfide-isomerase P4HB/PDI, a P4HB/PDI-CD4-CXCR4-gp120 complex may form. In that complex, P4HB/PDI could reach and reduce gp120 disulfide bonds, causing major conformational changes in gp120. TXN, another PDI family member could also be involved in disulfide rearrangements in Env during fusion. These changes are transmitted to the transmembrane protein gp41 and are thought to activate its fusogenic potential by unmasking its fusion peptide. Its function is as follows. The surface protein gp120 is a ligand for CD209/DC-SIGN and CLEC4M/DC-SIGNR, which are respectively found on dendritic cells (DCs), and on endothelial cells of liver sinusoids and lymph node sinuses. These interactions allow capture of viral particles at mucosal surfaces by these cells and subsequent transmission to permissive cells. DCs are professional antigen presenting cells, critical for host immunity by inducing specific immune responses against a broad variety of pathogens. They act as sentinels in various tissues where they take up antigen, process it, and present it to T-cells following migration to lymphoid organs. HIV subverts the migration properties of dendritic cells to gain access to CD4+ T-cells in lymph nodes. Virus transmission to permissive T-cells occurs either in trans (without DCs infection, through viral capture and transmission), or in cis (following DCs productive infection, through the usual CD4-gp120 interaction), thereby inducing a robust infection. In trans infection, bound virions remain infectious over days and it is proposed that they are not degraded, but protected in non-lysosomal acidic organelles within the DCs close to the cell membrane thus contributing to the viral infectious potential during DCs' migration from the periphery to the lymphoid tissues. On arrival at lymphoid tissues, intact virions recycle back to DCs' cell surface allowing virus transmission to CD4+ T-cells. Virion capture also seems to lead to MHC-II-restricted viral antigen presentation, and probably to the activation of HIV-specific CD4+ cells. The transmembrane protein gp41 (TM) acts as a class I viral fusion protein. Under the current model, the protein has at least 3 conformational states: pre-fusion native state, pre-hairpin intermediate state, and post-fusion hairpin state. During fusion of viral and target intracellular membranes, the coiled coil regions (heptad repeats) assume a trimer-of-hairpins structure, positioning the fusion peptide in close proximity to the C-terminal region of the ectodomain. The formation of this structure appears to drive apposition and subsequent fusion of viral and target cell membranes. Complete fusion occurs in host cell endosomes and is dynamin-dependent, however some lipid transfer might occur at the plasma membrane. The virus undergoes clathrin-dependent internalization long before endosomal fusion, thus minimizing the surface exposure of conserved viral epitopes during fusion and reducing the efficacy of inhibitors targeting these epitopes. Membranes fusion leads to delivery of the nucleocapsid into the cytoplasm. Functionally, the envelope glycoprotein gp160 precursor down-modulates cell surface CD4 antigen by interacting with it in the endoplasmic reticulum and blocking its transport to the cell surface. In terms of biological role, the gp120-gp41 heterodimer seems to contribute to T-cell depletion during HIV-1 infection. The envelope glycoproteins expressed on the surface of infected cells induce apoptosis through an interaction with uninfected cells expressing the receptor (CD4) and the coreceptors CXCR4 or CCR5. This type of bystander killing may be obtained by at least three distinct mechanisms. First, the interaction between the 2 cells can induce cellular fusion followed by nuclear fusion within the syncytium. Syncytia are condemned to die from apoptosis. Second, the 2 interacting cells may not fuse entirely and simply exchange plasma membrane lipids, after a sort of hemifusion process, followed by rapid death. Third, it is possible that virus-infected cells, on the point of undergoing apoptosis, fuse with CD4-expressing cells, in which case apoptosis is rapidly transmitted from one cell to the other and thus occurs in a sort of contagious fashion. Its function is as follows. The gp120-gp41 heterodimer allows rapid transcytosis of the virus through CD4 negative cells such as simple epithelial monolayers of the intestinal, rectal and endocervical epithelial barriers. Both gp120 and gp41 specifically recognize glycosphingolipids galactosyl-ceramide (GalCer) or 3' sulfo-galactosyl-ceramide (GalS) present in the lipid rafts structures of epithelial cells. Binding to these alternative receptors allows the rapid transcytosis of the virus through the epithelial cells. This transcytotic vesicle-mediated transport of virions from the apical side to the basolateral side of the epithelial cells does not involve infection of the cells themselves. The sequence is that of Envelope glycoprotein gp160 (env) from Homo sapiens (Human).